The chain runs to 247 residues: C-X-C motif chemokine 16 (247 aa).

The signal sequence occupies residues 1-26; sequence MRRGFGPLALTLFLFFFALLTLPGDG. At 27–198 the chain is on the extracellular side; the sequence is NQGSVAGSCY…EPGAGAGTQA (172 aa). Disulfide bonds link cysteine 35–cysteine 65 and cysteine 37–cysteine 79. Residues 120-152 form a disordered region; that stretch reads IPEATEGKPPDTSTAVQFQSTQQSTFPSGAPSL. Over residues 131-147 the composition is skewed to low complexity; the sequence is TSTAVQFQSTQQSTFPS. Residues 199 to 219 traverse the membrane as a helical segment; the sequence is LVPVLSLLAIVFFLVAAMVCV. At 220–247 the chain is on the cytoplasmic side; the sequence is LCNRRVTRQSSSGLQLCYTPVEPRPQGL.

It belongs to the intercrine alpha (chemokine CxC) family. Post-translationally, glycosylated.

It localises to the membrane. Its function is as follows. Induces a strong chemotactic response. Induces calcium mobilization. Binds to CXCR6/Bonzo. Also acts as a scavenger receptor on macrophages, which specifically binds to OxLDL (oxidized low density lipoprotein), suggesting that it may be involved in pathophysiology such as atherogenesis. This is C-X-C motif chemokine 16 (Cxcl16) from Rattus norvegicus (Rat).